Reading from the N-terminus, the 379-residue chain is uncharacterized protein (379 aa).

It belongs to the herpesviridae US22 family.

This is an uncharacterized protein from Human cytomegalovirus (strain AD169) (HHV-5).